We begin with the raw amino-acid sequence, 248 residues long: Tropomyosin alpha-4 chain (248 aa).

N-acetylalanine is present on Ala2. A coiled-coil region spans residues 2 to 248; the sequence is AGLNSLEAVK…DQTLDELNCI (247 aa). Ser6 is modified (phosphoserine). The tract at residues 16–47 is disordered; it reads ALQQQADEAEDRAQGLQRELDGERERREKAEG. Residues 33–47 show a composition bias toward basic and acidic residues; that stretch reads RELDGERERREKAEG. N6-acetyllysine is present on residues Lys177 and Lys215. Thr216 is modified (phosphothreonine).

Belongs to the tropomyosin family. In terms of assembly, homodimer. Heterodimer of an alpha (TPM1, TPM3 or TPM4) and a beta (TPM2) chain.

It localises to the cytoplasm. The protein localises to the cytoskeleton. In terms of biological role, binds to actin filaments in muscle and non-muscle cells. Plays a central role, in association with the troponin complex, in the calcium dependent regulation of vertebrate striated muscle contraction. Smooth muscle contraction is regulated by interaction with caldesmon. In non-muscle cells is implicated in stabilizing cytoskeleton actin filaments. Binds calcium. This Equus caballus (Horse) protein is Tropomyosin alpha-4 chain (TPM4).